Consider the following 74-residue polypeptide: Large ribosomal subunit protein bL31 (74 aa).

Residues cysteine 16, cysteine 18, cysteine 38, and cysteine 41 each contribute to the Zn(2+) site.

The protein belongs to the bacterial ribosomal protein bL31 family. Type A subfamily. Part of the 50S ribosomal subunit. The cofactor is Zn(2+).

Its function is as follows. Binds the 23S rRNA. The polypeptide is Large ribosomal subunit protein bL31 (Streptomyces griseus subsp. griseus (strain JCM 4626 / CBS 651.72 / NBRC 13350 / KCC S-0626 / ISP 5235)).